We begin with the raw amino-acid sequence, 490 residues long: Tryptophan 5-hydroxylase 2 (490 aa).

At serine 19 the chain carries Phosphoserine. Over residues 31–42 (LGSSTLNKPNSG) the composition is skewed to polar residues. Residues 31 to 58 (LGSSTLNKPNSGKNDDKGNKGSSKREAA) form a disordered region. The span at 43-58 (KNDDKGNKGSSKREAA) shows a compositional bias: basic and acidic residues. One can recognise an ACT domain in the interval 65–140 (AVVFSLKNEV…TIVTLNPPEN (76 aa)). Fe cation contacts are provided by histidine 318, histidine 323, and glutamate 363.

This sequence belongs to the biopterin-dependent aromatic amino acid hydroxylase family. Interacts with DNAJC12. The cofactor is Fe(2+). In terms of tissue distribution, brain specific.

The catalysed reaction is (6R)-L-erythro-5,6,7,8-tetrahydrobiopterin + L-tryptophan + O2 = 5-hydroxy-L-tryptophan + (4aS,6R)-4a-hydroxy-L-erythro-5,6,7,8-tetrahydrobiopterin. The protein operates within aromatic compound metabolism; serotonin biosynthesis; serotonin from L-tryptophan: step 1/2. The polypeptide is Tryptophan 5-hydroxylase 2 (TPH2) (Homo sapiens (Human)).